Consider the following 427-residue polypeptide: MRFSIFFKVVALFMITLFSFGAFAYYFVSSQISHENYQNEMRHYQFVTTINEILNNYSDYRAIEDYLYKIGFRETTIENLEKVLAKRRHQLHHRNIGYAEVFKFSDMVFILLKKDEHFVLYKDLHSVSYRNYFLAITVGLLLILFLFLFVLQSLLPLRELRSQVKPFAQGDKSVSCKSKQKDEIGDLANEFDNCILKINAMNESRVLFLRSIMHELRTPITKGKILSSMLKEELSCKRFSSIFDHLNMLIEQFARIEQLASKNYGSNKEKFLMSDLIDKIEKMLLIDEDKESPIHVSSSNYIIEADFELFSIALKNMVDNAIKYSDDKQVFLDFIGNNLVVSNKSKPLKEDFEKYLQPYFKSSNPSQAHGFGLGMYIIKNALEAMGLNLSYHYSNGRICFTIHDCVFNSFYDLEEDNEELPPPPPKI.

Helical transmembrane passes span 3 to 23 (FSIF…FGAF) and 131 to 151 (NYFL…LFVL). One can recognise an HAMP domain in the interval 151 to 203 (LQSLLPLRELRSQVKPFAQGDKSVSCKSKQKDEIGDLANEFDNCILKINAMNE). The 188-residue stretch at 211–398 (SIMHELRTPI…LSYHYSNGRI (188 aa)) folds into the Histidine kinase domain. Histidine 214 is subject to Phosphohistidine; by autocatalysis.

Autophosphorylated.

It localises to the membrane. It catalyses the reaction ATP + protein L-histidine = ADP + protein N-phospho-L-histidine.. Functionally, member of the two-component regulatory system ArsS/ArsR that regulates genes involved in biofilm formation and acid adaptation by acting on major ammonia-producing pathways. Functions as a sensor protein kinase which is autophosphorylated at a histidine residue and transfers its phosphate group to the conserved aspartic acid residue in the regulatory domain of ArsR. In turn, ArsR binds to the upstream promoter regions of target genes including ureA, amiE and amiF to positively regulate their expression in response to acidic pH. Also participates in acidic acclimatation in a phosphorylation-independent pathway by regulating acid-induced trafficking of urease and its accessory proteins to the inner membrane. The chain is Sensor histidine kinase ArsS from Helicobacter pylori (strain ATCC 700392 / 26695) (Campylobacter pylori).